The following is a 540-amino-acid chain: Probable tubulin polyglutamylase TTLL2 (540 aa).

The region spanning 41 to 384 (LKPLVFRVDE…NGLRSEEKKC (344 aa)) is the TTL domain. Residues lysine 169, 175–176 (RG), 197–200 (QKYI), and 210–212 (KCD) contribute to the ATP site. Arginine 175 serves as a coordination point for a protein. Residue arginine 236 participates in L-glutamate binding. 255-256 (TN) is an ATP binding site. The L-glutamate site is built by serine 258 and lysine 278. 3 residues coordinate Mg(2+): aspartate 330, glutamate 343, and asparagine 345. Lysine 361 contacts L-glutamate. The interval 479–499 (SQSQPHKMKGPAGDLPEAGST) is disordered.

The protein belongs to the tubulin--tyrosine ligase family. Mg(2+) is required as a cofactor. In terms of tissue distribution, highly expressed in brain, kidney, liver and testis. Expressed in heart, lung, muscle and spleen.

In terms of biological role, probable tubulin polyglutamylase that generates side chains of glutamate on the gamma-carboxyl group of specific glutamate residues within the C-terminal tail of target proteins. Similar to TTLL1, may acquire enzymatic activity only in complex with other proteins as it is most likely lacking domains important for autonomous activity. Probably involved in the side-chain initiation step of the polyglutamylation reaction rather than the elongation step. This is Probable tubulin polyglutamylase TTLL2 from Mus musculus (Mouse).